Consider the following 358-residue polypeptide: Glutamate 5-kinase (358 aa).

An ATP-binding site is contributed by lysine 9. Substrate contacts are provided by serine 49, aspartate 136, and asparagine 148. ATP-binding positions include 168–169 and 210–216; these read TD and TGGMTTK. In terms of domain architecture, PUA spans 275-353; sequence DAAVEVDAGA…RAEGVLIHRN (79 aa).

The protein belongs to the glutamate 5-kinase family.

It is found in the cytoplasm. The catalysed reaction is L-glutamate + ATP = L-glutamyl 5-phosphate + ADP. The protein operates within amino-acid biosynthesis; L-proline biosynthesis; L-glutamate 5-semialdehyde from L-glutamate: step 1/2. Catalyzes the transfer of a phosphate group to glutamate to form L-glutamate 5-phosphate. In Streptococcus suis (strain 05ZYH33), this protein is Glutamate 5-kinase.